The following is a 116-amino-acid chain: Iron-sulfur cluster insertion protein ErpA (116 aa).

Residues Cys44, Cys108, and Cys110 each contribute to the iron-sulfur cluster site.

The protein belongs to the HesB/IscA family. In terms of assembly, homodimer. The cofactor is iron-sulfur cluster.

Its function is as follows. Required for insertion of 4Fe-4S clusters for at least IspG. The chain is Iron-sulfur cluster insertion protein ErpA from Shewanella pealeana (strain ATCC 700345 / ANG-SQ1).